The chain runs to 378 residues: Acetylornithine deacetylase (378 aa).

Histidine 76 serves as a coordination point for Zn(2+). The active site involves aspartate 78. Residue aspartate 108 coordinates Zn(2+). Glutamate 140 is an active-site residue. Glutamate 141, glutamate 165, and histidine 351 together coordinate Zn(2+).

The protein belongs to the peptidase M20A family. ArgE subfamily. In terms of assembly, homodimer. It depends on Zn(2+) as a cofactor. Co(2+) is required as a cofactor. Glutathione serves as cofactor.

Its subcellular location is the cytoplasm. The catalysed reaction is N(2)-acetyl-L-ornithine + H2O = L-ornithine + acetate. Its pathway is amino-acid biosynthesis; L-arginine biosynthesis; L-ornithine from N(2)-acetyl-L-ornithine (linear): step 1/1. In terms of biological role, catalyzes the hydrolysis of the amide bond of N(2)-acetylated L-amino acids. Cleaves the acetyl group from N-acetyl-L-ornithine to form L-ornithine, an intermediate in L-arginine biosynthesis pathway, and a branchpoint in the synthesis of polyamines. In Vibrio parahaemolyticus serotype O3:K6 (strain RIMD 2210633), this protein is Acetylornithine deacetylase.